A 60-amino-acid chain; its full sequence is MAKKTIKVTQTRSSIGRLPKHKATLRGLGLRRIGHTVELEDTAAVRGMVNRVNYMIKVEG.

It belongs to the universal ribosomal protein uL30 family. Part of the 50S ribosomal subunit.

This Idiomarina loihiensis (strain ATCC BAA-735 / DSM 15497 / L2-TR) protein is Large ribosomal subunit protein uL30.